Consider the following 238-residue polypeptide: Snake venom metalloproteinase HF-1 (238 aa).

Positions 17-221 constitute a Peptidase M12B domain; the sequence is RYIQLVVVAD…YNPQCILNKP (205 aa). Aspartate 106 is a binding site for Ca(2+). Cystine bridges form between cysteine 130–cysteine 216 and cysteine 174–cysteine 181. A Zn(2+)-binding site is contributed by histidine 158. The active site involves glutamate 159. Zn(2+) is bound by residues histidine 162 and histidine 168. Ca(2+)-binding residues include cysteine 216 and asparagine 219.

As to quaternary structure, monomer. Zn(2+) serves as cofactor. Expressed by the venom gland.

Its subcellular location is the secreted. With respect to regulation, inhibited by EDTA and EGTA. Inhibited by serum and antihemorrhagic factors Da2-I and Da2-II from D.albiventris. Not inhibited by PMSF or SBT-I. Its function is as follows. Snake venom zinc metalloprotease that is weakly hemorrhagic and has Aalpha, Bbeta fibrinogenolytic activities. Cleaves the Aalpha chain of fibrinogen first, followed by the Bbeta chain and shows no effect on the gamma chain. Has caseinolytic activity. Induces dose-dependent edema. The sequence is that of Snake venom metalloproteinase HF-1 from Bothrops marajoensis (Marajo lancehead).